A 350-amino-acid polypeptide reads, in one-letter code: Nicotinate-nucleotide--dimethylbenzimidazole phosphoribosyltransferase (350 aa).

E317 (proton acceptor) is an active-site residue.

The protein belongs to the CobT family.

The enzyme catalyses 5,6-dimethylbenzimidazole + nicotinate beta-D-ribonucleotide = alpha-ribazole 5'-phosphate + nicotinate + H(+). Its pathway is nucleoside biosynthesis; alpha-ribazole biosynthesis; alpha-ribazole from 5,6-dimethylbenzimidazole: step 1/2. Catalyzes the synthesis of alpha-ribazole-5'-phosphate from nicotinate mononucleotide (NAMN) and 5,6-dimethylbenzimidazole (DMB). The protein is Nicotinate-nucleotide--dimethylbenzimidazole phosphoribosyltransferase of Shewanella oneidensis (strain ATCC 700550 / JCM 31522 / CIP 106686 / LMG 19005 / NCIMB 14063 / MR-1).